The sequence spans 219 residues: Probable transcription factor At1g55950 (219 aa).

Residues 9–77 (ASHSLKSLMA…DEKMETEEEG (69 aa)) form a disordered region. Positions 17–30 (MAKKNKRSQQKNKC) are enriched in basic residues. Basic and acidic residues predominate over residues 31-48 (LKPEKDPSTVKRLLEDPP). Positions 65 to 77 (YGDDEKMETEEEG) are enriched in acidic residues.

It belongs to the GeBP family.

The chain is Probable transcription factor At1g55950 from Arabidopsis thaliana (Mouse-ear cress).